A 586-amino-acid polypeptide reads, in one-letter code: Membrane protein insertase YidC (586 aa).

The next 5 helical transmembrane spans lie at 5–25 (TLIGLVLIALIMMAWFQLMAP), 371–391 (GVIIILFALFIKLVTYPLTMA), 436–456 (LGGCLPTVIQMPLLFAMFYVF), 486–506 (IPLYGDHVSVIPILMGVAVFF), and 522–542 (FMMYLFPGMMLIFFNNMPSGL).

The protein belongs to the OXA1/ALB3/YidC family. Type 1 subfamily. In terms of assembly, interacts with the Sec translocase complex via SecD. Specifically interacts with transmembrane segments of nascent integral membrane proteins during membrane integration.

It is found in the cell inner membrane. In terms of biological role, required for the insertion and/or proper folding and/or complex formation of integral membrane proteins into the membrane. Involved in integration of membrane proteins that insert both dependently and independently of the Sec translocase complex, as well as at least some lipoproteins. Aids folding of multispanning membrane proteins. The chain is Membrane protein insertase YidC from Chloroherpeton thalassium (strain ATCC 35110 / GB-78).